Reading from the N-terminus, the 1472-residue chain is ABC transporter FGM5 (1472 aa).

A run of 11 helical transmembrane segments spans residues 32–52, 67–87, 100–120, 163–183, 197–217, 271–291, 316–336, 386–406, 412–432, 493–513, and 534–554; these read IILG…RVAT, FTKL…LILS, FAVA…ALSF, YAGV…LELQ, SPEE…IGIF, ALIV…GFQY, GLIG…ALFW, FHGL…CFLL, LAFI…TAIA, LLIM…VVAF, and LLTN…AAFV. One can recognise an ABC transmembrane type-1 1 domain in the interval 284–551; sequence IAMIGFQYAQ…MFQSVPAVIA (268 aa). One can recognise an ABC transporter 1 domain in the interval 605-834; the sequence is ISIVDGSFGW…GIYIPTLGLS (230 aa). 638 to 645 is an ATP binding site; that stretch reads GPVASGKS. N-linked (GlcNAc...) asparagine glycans are attached at residues asparagine 682, asparagine 696, asparagine 763, asparagine 784, and asparagine 843. 4 helical membrane-spanning segments follow: residues 900-920, 938-958, 1003-1023, and 1024-1044; these read LLSG…MGWW, LFRG…VIFM, GELP…FAMA, and VVVA…FSII. Positions 900 to 1139 constitute an ABC transmembrane type-1 2 domain; the sequence is LLSGIMYAVG…VGVVAISTQL (240 aa). Asparagine 1101 is a glycosylation site (N-linked (GlcNAc...) asparagine). The chain crosses the membrane as a helical span at residues 1116 to 1136; the sequence is FLATFLNLIVMVLAVGVVAIS. The ABC transporter 2 domain maps to 1218 to 1468; sequence YKNDDESPAS…EGSWFSQLWA (251 aa). 1255–1262 contacts ATP; the sequence is GRTGSGKS. Asparagine 1277 and asparagine 1293 each carry an N-linked (GlcNAc...) asparagine glycan.

This sequence belongs to the ABC transporter superfamily. ABCC family. Conjugate transporter (TC 3.A.1.208) subfamily.

It is found in the cell membrane. The protein operates within secondary metabolite biosynthesis. In terms of biological role, ABC transporter; part of the Fg3_54/C64 gene cluster that mediates the biosynthesis of the octapeptide fusaoctaxin A, a virulence factor that is required for cell-to-cell invasiveness of plant host. The 2 nonribosomal peptide synthetases NRPS9 and NRPS5 form an assembly line which likely utilizes GABA as a starter unit (loaded on the unique module M1 of NRPS9) and sequentially incorporates seven extender units composed of the residues L-Ala, L-allo-Ile, L-Ser, L-Val, L-Ser, L-Leu and L-Leu, respectively. During the process, each of the residues that are tethered on modules M3-M7 of NRPS5 containing an E domain can undergo an epimerization reaction to produce a D-configuration before the transpeptidation reaction occurs. The elongation of the peptidyl chain might be terminated by module M8-mediated L-Leu incorporation, followed by R domain-catalyzed 4 electron reduction to release the resulting octapeptide from the assembly line as an alcohol. Fusaoctaxin A is cleaved by the cluster specific ABC transporter FGM5 to the pentapeptide fusapentaxin A and the tripeptide fusatrixin A. The other enzymes from the cluster, FGM1, FGM2, FGM3 and FGM9 seem not to be involved in the biosynthesis of fusaoctaxin A and their functions have still to be determined. This Gibberella zeae (strain ATCC MYA-4620 / CBS 123657 / FGSC 9075 / NRRL 31084 / PH-1) (Wheat head blight fungus) protein is ABC transporter FGM5.